Consider the following 116-residue polypeptide: Aspartate 1-decarboxylase (116 aa).

S25 serves as the catalytic Schiff-base intermediate with substrate; via pyruvic acid. S25 is subject to Pyruvic acid (Ser). T57 contacts substrate. The Proton donor role is filled by Y58. Position 72-74 (G72–A74) interacts with substrate.

The protein belongs to the PanD family. As to quaternary structure, heterooctamer of four alpha and four beta subunits. The cofactor is pyruvate. Post-translationally, is synthesized initially as an inactive proenzyme, which is activated by self-cleavage at a specific serine bond to produce a beta-subunit with a hydroxyl group at its C-terminus and an alpha-subunit with a pyruvoyl group at its N-terminus.

It localises to the cytoplasm. The catalysed reaction is L-aspartate + H(+) = beta-alanine + CO2. It participates in cofactor biosynthesis; (R)-pantothenate biosynthesis; beta-alanine from L-aspartate: step 1/1. Catalyzes the pyruvoyl-dependent decarboxylation of aspartate to produce beta-alanine. The polypeptide is Aspartate 1-decarboxylase (Helicobacter acinonychis (strain Sheeba)).